The chain runs to 206 residues: MDAVTPKKDIPRPDSVRRPSQQEAEEAVRTLIAWAGDDPAREGLIDTPKRVVNAYKEWFEGYGEDPVKYLSRTFEDVQGYDDIVMLRNIEVESHCEHHIAPFIGKAFIAYKPSTAVVGISKLARVVEIFAKRLQTQETMTAQICDAITESLAPMGTAVFIEAEHQCMSTRGVHHKHVTTITTQFTGVFKSDADLRNRFLNMCGQTV.

Over residues 1 to 17 (MDAVTPKKDIPRPDSVR) the composition is skewed to basic and acidic residues. Residues 1–23 (MDAVTPKKDIPRPDSVRRPSQQE) are disordered. Residues cysteine 95, histidine 98, and cysteine 166 each coordinate Zn(2+).

It belongs to the GTP cyclohydrolase I family. As to quaternary structure, toroid-shaped homodecamer, composed of two pentamers of five dimers.

It carries out the reaction GTP + H2O = 7,8-dihydroneopterin 3'-triphosphate + formate + H(+). It functions in the pathway cofactor biosynthesis; 7,8-dihydroneopterin triphosphate biosynthesis; 7,8-dihydroneopterin triphosphate from GTP: step 1/1. This is GTP cyclohydrolase 1 from Hyphomonas neptunium (strain ATCC 15444).